The following is a 494-amino-acid chain: 4-trimethylaminobutyraldehyde dehydrogenase (494 aa).

Ser2 is modified (N-acetylserine). The residue at position 30 (Lys30) is an N6-acetyllysine; alternate. At Lys30 the chain carries N6-succinyllysine; alternate. At Lys59 the chain carries N6-succinyllysine. NAD(+) contacts are provided by residues Lys180 and 232 to 236 (GSVPT). The active-site Proton acceptor is the Glu254. Cys288 (nucleophile) is an active-site residue. At Lys298 the chain carries N6-acetyllysine. At Lys303 the chain carries N6-acetyllysine; alternate. Lys303 carries the N6-succinyllysine; alternate modification. Position 344 is an N6-acetyllysine (Lys344). Residue Glu391 participates in NAD(+) binding.

The protein belongs to the aldehyde dehydrogenase family. In terms of assembly, homotetramer.

The protein localises to the cytoplasm. It localises to the cytosol. It carries out the reaction 4-(trimethylamino)butanal + NAD(+) + H2O = 4-(trimethylamino)butanoate + NADH + 2 H(+). The catalysed reaction is an aldehyde + NAD(+) + H2O = a carboxylate + NADH + 2 H(+). The enzyme catalyses 4-aminobutanal + NAD(+) + H2O = 4-aminobutanoate + NADH + 2 H(+). It catalyses the reaction formaldehyde + NAD(+) + H2O = formate + NADH + 2 H(+). It carries out the reaction acetaldehyde + NAD(+) + H2O = acetate + NADH + 2 H(+). The catalysed reaction is imidazole-4-acetaldehyde + NAD(+) + H2O = imidazole-4-acetate + NADH + 2 H(+). The enzyme catalyses acrolein + NAD(+) + H2O = acrylate + NADH + 2 H(+). It catalyses the reaction (5-hydroxyindol-3-yl)acetaldehyde + NAD(+) + H2O = (5-hydroxyindol-3-yl)acetate + NADH + 2 H(+). It carries out the reaction 3,4-dihydroxyphenylacetaldehyde + NAD(+) + H2O = 3,4-dihydroxyphenylacetate + NADH + 2 H(+). The catalysed reaction is spermine monoaldehyde + NAD(+) + H2O = N-(2-carboxyethyl)spermidine + NADH + 2 H(+). The enzyme catalyses propanal + NAD(+) + H2O = propanoate + NADH + 2 H(+). It catalyses the reaction butanal + NAD(+) + H2O = butanoate + NADH + 2 H(+). It carries out the reaction pentanal + NAD(+) + H2O = pentanoate + NADH + 2 H(+). The catalysed reaction is hexanal + NAD(+) + H2O = hexanoate + NADH + 2 H(+). It functions in the pathway amine and polyamine biosynthesis; carnitine biosynthesis. Its function is as follows. Converts gamma-trimethylaminobutyraldehyde into gamma-butyrobetaine with high efficiency (in vitro). Can catalyze the irreversible oxidation of a broad range of aldehydes to the corresponding acids in an NAD-dependent reaction, but with low efficiency. Catalyzes the oxidation of aldehydes arising from biogenic amines and polyamines. This chain is 4-trimethylaminobutyraldehyde dehydrogenase (ALDH9A1), found in Sus scrofa (Pig).